A 430-amino-acid chain; its full sequence is Asparagine--tRNA ligase (430 aa).

This sequence belongs to the class-II aminoacyl-tRNA synthetase family. In terms of assembly, homodimer.

It is found in the cytoplasm. It carries out the reaction tRNA(Asn) + L-asparagine + ATP = L-asparaginyl-tRNA(Asn) + AMP + diphosphate + H(+). The chain is Asparagine--tRNA ligase from Staphylococcus haemolyticus (strain JCSC1435).